The chain runs to 442 residues: tRNA(Ile)-lysidine synthase (442 aa).

27–32 (SGGLDS) is a binding site for ATP.

Belongs to the tRNA(Ile)-lysidine synthase family.

It is found in the cytoplasm. It carries out the reaction cytidine(34) in tRNA(Ile2) + L-lysine + ATP = lysidine(34) in tRNA(Ile2) + AMP + diphosphate + H(+). Functionally, ligates lysine onto the cytidine present at position 34 of the AUA codon-specific tRNA(Ile) that contains the anticodon CAU, in an ATP-dependent manner. Cytidine is converted to lysidine, thus changing the amino acid specificity of the tRNA from methionine to isoleucine. The sequence is that of tRNA(Ile)-lysidine synthase from Photorhabdus laumondii subsp. laumondii (strain DSM 15139 / CIP 105565 / TT01) (Photorhabdus luminescens subsp. laumondii).